The primary structure comprises 162 residues: Caveolin-2 (162 aa).

The Cytoplasmic portion of the chain corresponds to 1-86; that stretch reads MGLETEKADV…FEISKYVVYK (86 aa). At Tyr-19 the chain carries Phosphotyrosine; by SRC. Residues Ser-20 and Ser-23 each carry the phosphoserine modification. Position 27 is a phosphotyrosine; by SRC (Tyr-27). Phosphoserine is present on Ser-36. The segment at residues 87–107 is an intramembrane region (helical); it reads FLTVFLAIPLAFAAGILFATL. The Cytoplasmic segment spans residues 108–162; that stretch reads SCLHIWIIMPFVKTCLMVLPSVQTVWKTVTDVVIAPLCASVGRSFSSVSLQLSHD.

Belongs to the caveolin family. Monomer or homodimer. Interacts with CAV1; the interaction forms a stable heterooligomeric complex that is required for targeting to lipid rafts and for caveolae formation. Tyrosine phosphorylated forms do not form heterooligomers with the Tyr-19-phosphorylated form existing as a monomer or dimer, and the Tyr-27-form as a monomer only. Interacts (tyrosine phosphorylated form) with the SH2 domain-containing proteins, RASA1, NCK1 and SRC. Interacts (tyrosine phosphorylated form) with INSR, the interaction (Tyr-27-phosphorylated form) is increased on insulin stimulation. Interacts (Tyr-19 phosphorylated form) with MAPK1 (phosphorylated form); the interaction, promoted by insulin, leads to nuclear location and MAPK1 activation. Interacts with STAT3; the interaction is increased on insulin-induced tyrosine phosphorylation leading to STAT activation. Phosphorylated on serine and tyrosine residues. CAV1 promotes phosphorylation on Ser-23 which then targets the complex to the plasma membrane, lipid rafts and caveolae. Phosphorylation on Ser-36 appears to modulate mitosis in endothelial cells. Phosphorylation on both Tyr-19 and Tyr-27 is required for insulin-induced 'Ser-727' phosphorylation of STAT3 and its activation. Phosphorylation on Tyr-19 is required for insulin-induced phosphorylation of MAPK1 and DNA binding of STAT3. Tyrosine phosphorylation is induced by both EGF and insulin (By. similarity).

It localises to the nucleus. The protein resides in the cytoplasm. It is found in the golgi apparatus membrane. Its subcellular location is the cell membrane. The protein localises to the membrane. It localises to the caveola. Its function is as follows. May act as a scaffolding protein within caveolar membranes. Interacts directly with G-protein alpha subunits and can functionally regulate their activity. Acts as an accessory protein in conjunction with CAV1 in targeting to lipid rafts and driving caveolae formation. The Ser-36 phosphorylated form has a role in modulating mitosis in endothelial cells. Positive regulator of cellular mitogenesis of the MAPK signaling pathway. Required for the insulin-stimulated nuclear translocation and activation of MAPK1 and STAT3, and the subsequent regulation of cell cycle progression. The polypeptide is Caveolin-2 (CAV2) (Loxodonta africana (African elephant)).